Consider the following 240-residue polypeptide: Eukaryotic translation initiation factor 4E-2 (240 aa).

Residues 1–29 (MVVMDSPVSGRMADQNIDPNTTTSPSPIE) form a disordered region. Over residues 17–26 (IDPNTTTSPS) the composition is skewed to polar residues. 2 EIF4G-binding regions span residues 65–68 (HCFQ) and 75–111 (FDNP…NNIH). MRNA is bound by residues 83–88 (NQVIWG), lysine 115, and 133–134 (WE). Cysteine 138 and cysteine 176 are joined by a disulfide. The interval 159–168 (NTLLALVGEQ) is EIF4G-binding. MRNA-binding positions include 183-188 (RTRGDR) and 228-232 (KTLDR).

Belongs to the eukaryotic initiation factor 4E family. As to quaternary structure, EIF4F is a multi-subunit complex, the composition of which varies with external and internal environmental conditions. It is composed of at least EIF4A, EIF4E and EIF4G. EIF4E is also known to interact with other partners. In higher plants two isoforms of EIF4F have been identified, named isoform EIF4F and isoform EIF(iso)4F. Isoform EIF4F has subunits p220 and p26, whereas isoform EIF(iso)4F has subunits p82 and p28. According to the redox status, the Cys-138-Cys-176 disulfide bridge may have a role in regulating protein function by affecting its ability to bind capped mRNA.

It localises to the nucleus. The protein localises to the cytoplasm. Component of the protein complex eIF4F, which is involved in the recognition of the mRNA cap, ATP-dependent unwinding of 5'-terminal secondary structure and recruitment of mRNA to the ribosome. Recognizes and binds the 7-methylguanosine-containing mRNA cap during an early step in the initiation of protein synthesis and facilitates ribosome binding by inducing the unwinding of the mRNAs secondary structures. This chain is Eukaryotic translation initiation factor 4E-2, found in Arabidopsis thaliana (Mouse-ear cress).